The following is a 365-amino-acid chain: Spore germination protein A2 (365 aa).

The next 11 membrane-spanning stretches (helical) occupy residues 12-32 (TFQGISIVANTMLGAGLLTLP), 45-65 (WITLILEGFIFIFFIYLNTLI), 85-105 (WIGSIIGLLICGYFLGVASFE), 122-142 (PIQVIILTFICCGIYLMVGGL), 148-168 (LFPFYLTVTIIILLIVFGISF), 187-207 (IANSLTVVSISFLGMEVMLFL), 223-243 (LGFLIPIILYILTYIIVVGAL), 250-270 (TLIWPTISLFQSFELKGIFIE), 275-295 (FLLVVWIIQFFTTFVIYGYFA), 303-323 (FGLSTKTSMVIIGITVFYFSL), and 338-358 (LGYIFVSLFLLPFILFFIVAL).

It belongs to the amino acid-polyamine-organocation (APC) superfamily. Spore germination protein (SGP) (TC 2.A.3.9) family.

It is found in the cell membrane. In terms of biological role, involved in the germinative response to L-alanine. Could be an amino acid transporter. Forms a complex at the inner spore membrane which acts as a receptor for L-alanine, thus is involved in the stimulation of germination in response to alanine. Can stimulate germination in the absence of gerD and gerK gene products (fructose and glucose receptors, respectively), but the response is improved in their presence. This chain is Spore germination protein A2 (gerAB), found in Bacillus subtilis (strain 168).